The sequence spans 56 residues: Secreted virulence factor CLU5a (56 aa).

The signal sequence occupies residues Met-1–Ala-18.

Belongs to the MC69 virulence factor family. Homodimer; disulfide-linked. Dimerization can possibly extend to multimerisation.

The protein localises to the secreted. Functionally, secreted protein required for appressorial penetration of intact host epidermal cells and for pathogenicit, but not for subsequent biotrophic and necrotrophic colonization of leaves. This is Secreted virulence factor CLU5a from Colletotrichum graminicola (strain M1.001 / M2 / FGSC 10212) (Maize anthracnose fungus).